We begin with the raw amino-acid sequence, 222 residues long: Methylthioribulose-1-phosphate dehydratase (222 aa).

2 residues coordinate Zn(2+): H94 and H96.

Belongs to the aldolase class II family. MtnB subfamily. Zn(2+) is required as a cofactor.

It carries out the reaction 5-(methylsulfanyl)-D-ribulose 1-phosphate = 5-methylsulfanyl-2,3-dioxopentyl phosphate + H2O. It participates in amino-acid biosynthesis; L-methionine biosynthesis via salvage pathway; L-methionine from S-methyl-5-thio-alpha-D-ribose 1-phosphate: step 2/6. Functionally, catalyzes the dehydration of methylthioribulose-1-phosphate (MTRu-1-P) into 2,3-diketo-5-methylthiopentyl-1-phosphate (DK-MTP-1-P). The protein is Methylthioribulose-1-phosphate dehydratase of Yersinia pseudotuberculosis serotype IB (strain PB1/+).